The primary structure comprises 168 residues: Ubiquitin-conjugating enzyme E2 7 (168 aa).

The disordered stretch occupies residues 1-21 (MATAPARRASSSRSSSEISRT). Positions 6 to 166 (ARRASSSRSS…VRRAVRKSQE (161 aa)) constitute a UBC core domain. Cys-92 serves as the catalytic Glycyl thioester intermediate.

This sequence belongs to the ubiquitin-conjugating enzyme family.

It carries out the reaction S-ubiquitinyl-[E1 ubiquitin-activating enzyme]-L-cysteine + [E2 ubiquitin-conjugating enzyme]-L-cysteine = [E1 ubiquitin-activating enzyme]-L-cysteine + S-ubiquitinyl-[E2 ubiquitin-conjugating enzyme]-L-cysteine.. It participates in protein modification; protein ubiquitination. In terms of biological role, catalyzes the covalent attachment of ubiquitin to other proteins so as to signal them for selective protein degradation. Involved in the formation of multiubiquitin chains. The chain is Ubiquitin-conjugating enzyme E2 7 (UBC7) from Triticum aestivum (Wheat).